The sequence spans 319 residues: Thioredoxin reductase (319 aa).

An FAD-binding site is contributed by 36–48 (EGFMAGGVAAGGQ). Cysteines 144 and 147 form a disulfide. FAD is bound at residue 289–298 (DVQDKVYRQA).

The protein belongs to the class-II pyridine nucleotide-disulfide oxidoreductase family. Homodimer. Requires FAD as cofactor.

The catalysed reaction is [thioredoxin]-dithiol + NADP(+) = [thioredoxin]-disulfide + NADPH + H(+). The sequence is that of Thioredoxin reductase (trrA) from Dictyostelium discoideum (Social amoeba).